We begin with the raw amino-acid sequence, 456 residues long: L-2-hydroxyglutarate dehydrogenase, mitochondrial (456 aa).

A mitochondrion-targeting transit peptide spans 1-20 (MLKTSFLLSKRNAVSLSRVL).

The protein belongs to the L2HGDH family. The cofactor is FAD.

It is found in the mitochondrion. It carries out the reaction (S)-2-hydroxyglutarate + A = 2-oxoglutarate + AH2. The protein is L-2-hydroxyglutarate dehydrogenase, mitochondrial of Nematostella vectensis (Starlet sea anemone).